We begin with the raw amino-acid sequence, 111 residues long: C-type lectin lectoxin-Enh2 (111 aa).

The signal sequence occupies residues 1 to 23; the sequence is MGQFTVVSLGLLAMFLSLSGAKG. A disulfide bridge connects residues Cys-26 and Cys-37. Residues 33–108 enclose the C-type lectin domain; sequence RNGVCNKLFP…CASLHPFICQ (76 aa). A Mannose-binding motif is present at residues 72-74; it reads EPN. Glu-80, Asn-95, and Asp-96 together coordinate Ca(2+). A disulfide bridge links Cys-82 with Cys-99.

Belongs to the true venom lectin family. As to expression, expressed by the venom gland.

It localises to the secreted. Mannose-binding lectin which recognizes specific carbohydrate structures and agglutinates a variety of animal cells by binding to cell-surface glycoproteins and glycolipids. May be a calcium-dependent lectin. In Pseudoferania polylepis (Macleay's water snake), this protein is C-type lectin lectoxin-Enh2.